Here is a 1271-residue protein sequence, read N- to C-terminus: Diacylglycerol kinase kappa (1271 aa).

Residues 1–15 (MDRGAAAAQGTAPPQ) show a composition bias toward low complexity. Residues 1-160 (MDRGAAAAQG…PEPTPEPVTE (160 aa)) are disordered. Residues 23–44 (SPEPPPPWPPPPPPPAPPPAPP) show a composition bias toward pro residues. 33 repeat units span residues 48 to 51 (EASP), 52 to 55 (EPIP), 56 to 59 (EPCP), 60 to 63 (ELAP), 64 to 67 (GPCP), 68 to 71 (EATS), 72 to 75 (ESAT), 76 to 79 (ELYT), 80 to 83 (EPTP), 84 to 87 (EPAT), 88 to 91 (EPAS), 92 to 95 (EPAP), 96 to 99 (EPAT), 100 to 103 (EPAP), 104 to 107 (EPAT), 108 to 111 (EPAP), 112 to 115 (EPAP), 116 to 119 (EPAT), 120 to 123 (ESAP), 124 to 127 (EPTP), 128 to 131 (EPAL), 132 to 135 (ESVP), 136 to 139 (EPAP), 140 to 143 (ELTP), 144 to 147 (EVAP), 148 to 151 (ELAP), 152 to 155 (EPTP), 156 to 159 (EPVT), 160 to 163 (ELAP), 164 to 167 (EFCP), 168 to 171 (EAAP), 172 to 175 (EFRP), and 176 to 179 (SPAP). The interval 48-179 (EASPEPIPEP…APEFRPSPAP (132 aa)) is 33 X 4 AA approximate tandem repeats of E-P-A-P. The segment covering 52–66 (EPIPEPCPELAPGPC) has biased composition (pro residues). The residue at position 78 (Tyr78) is a Phosphotyrosine. A compositionally biased stretch (pro residues) spans 82-116 (TPEPATEPASEPAPEPATEPAPEPATEPAPEPAPE). Residues 139–149 (PELTPEVAPEL) are compositionally biased toward low complexity. Positions 190 to 209 (ERGLKTSPSPSPSPSPRTPM) are disordered. The PH domain maps to 216–309 (KILKEGPMLK…WINIIKTIQQ (94 aa)). 2 consecutive Phorbol-ester/DAG-type zinc fingers follow at residues 327 to 377 (MHCW…SKDC) and 398 to 449 (PHQW…SKEC). Positions 487–622 (ACSCPLLIFI…LDRWSVMIRE (136 aa)) constitute a DAGKc domain. Disordered stretches follow at residues 805 to 825 (DDPEDINQTSPRRRSRRGTLS) and 1252 to 1271 (RHREDEAEGDDPLTPSRSQL). Residues 1199–1268 (PIFVPEEKSS…EGDDPLTPSR (70 aa)) are required for localization to the plasma membrane.

This sequence belongs to the eukaryotic diacylglycerol kinase family. In terms of assembly, does not form homooligomers. In terms of processing, phosphorylated at Tyr-78 by some member of the SRC family in response to H(2)O(2). In terms of tissue distribution, expressed in testis, and to a lesser extent in placenta.

It localises to the cell membrane. The enzyme catalyses a 1,2-diacyl-sn-glycerol + ATP = a 1,2-diacyl-sn-glycero-3-phosphate + ADP + H(+). It carries out the reaction 1,2-di-(9Z-octadecenoyl)-sn-glycerol + ATP = 1,2-di-(9Z-octadecenoyl)-sn-glycero-3-phosphate + ADP + H(+). It functions in the pathway lipid metabolism; glycerolipid metabolism. Inhibited in response to H(2)O(2). Functionally, diacylglycerol kinase that converts diacylglycerol/DAG into phosphatidic acid/phosphatidate/PA and regulates the respective levels of these two bioactive lipids. Thereby, acts as a central switch between the signaling pathways activated by these second messengers with different cellular targets and opposite effects in numerous biological processes. The sequence is that of Diacylglycerol kinase kappa from Homo sapiens (Human).